A 967-amino-acid chain; its full sequence is Phosphoenolpyruvate carboxylase 1 (967 aa).

S11 carries the post-translational modification Phosphoserine. Catalysis depends on residues H173 and K602. Position 704 is a phosphoserine (S704).

The protein belongs to the PEPCase type 1 family. As to quaternary structure, homotetramer. Requires Mg(2+) as cofactor. Mn(2+) is required as a cofactor. The phosphorylation of Ser-11 is reversibly promoted by inorganic phosphate (Pi) deprivation. Enhanced activity by phosphorylation at pH 7.3 by lowering Km and sensitivity to inhibition by L-malate and L-aspartate, while enhancing activation by glucose 6-phosphate. Expressed in all plant organs, with higher levels in roots.

It is found in the cytoplasm. It carries out the reaction oxaloacetate + phosphate = phosphoenolpyruvate + hydrogencarbonate. By light-reversible phosphorylation. Activated by inorganic phosphate (Pi) deprivation and glucose 6-phosphate. Inhibited by L-malate and L-aspartate. Functionally, through the carboxylation of phosphoenolpyruvate (PEP) it forms oxaloacetate, a four-carbon dicarboxylic acid source for the tricarboxylic acid cycle. Contributes probably to the adaptation to inorganic phosphate (Pi) deprivation. This chain is Phosphoenolpyruvate carboxylase 1 (PPC1), found in Arabidopsis thaliana (Mouse-ear cress).